The chain runs to 57 residues: Putative secreted protein MT0250 (57 aa).

Positions 1-32 (MNRIVAPAAASVVVGLLLGAAAIFGVTLMVQQ) are cleaved as a signal peptide. A disordered region spans residues 34 to 57 (KKPPLPGGDPSSSVLNRVEYGNRS).

The chain is Putative secreted protein MT0250 from Mycobacterium tuberculosis (strain CDC 1551 / Oshkosh).